We begin with the raw amino-acid sequence, 154 residues long: 6,7-dimethyl-8-ribityllumazine synthase (154 aa).

5-amino-6-(D-ribitylamino)uracil contacts are provided by residues tryptophan 23, 57–59 (AFE), and 81–83 (AVI). 86 to 87 (AT) contributes to the (2S)-2-hydroxy-3-oxobutyl phosphate binding site. The Proton donor role is filled by histidine 89. 5-amino-6-(D-ribitylamino)uracil is bound at residue phenylalanine 114. Arginine 128 contributes to the (2S)-2-hydroxy-3-oxobutyl phosphate binding site.

The protein belongs to the DMRL synthase family.

It catalyses the reaction (2S)-2-hydroxy-3-oxobutyl phosphate + 5-amino-6-(D-ribitylamino)uracil = 6,7-dimethyl-8-(1-D-ribityl)lumazine + phosphate + 2 H2O + H(+). The protein operates within cofactor biosynthesis; riboflavin biosynthesis; riboflavin from 2-hydroxy-3-oxobutyl phosphate and 5-amino-6-(D-ribitylamino)uracil: step 1/2. Its function is as follows. Catalyzes the formation of 6,7-dimethyl-8-ribityllumazine by condensation of 5-amino-6-(D-ribitylamino)uracil with 3,4-dihydroxy-2-butanone 4-phosphate. This is the penultimate step in the biosynthesis of riboflavin. This Sulfurimonas denitrificans (strain ATCC 33889 / DSM 1251) (Thiomicrospira denitrificans (strain ATCC 33889 / DSM 1251)) protein is 6,7-dimethyl-8-ribityllumazine synthase.